We begin with the raw amino-acid sequence, 559 residues long: Potassium-transporting ATPase potassium-binding subunit (559 aa).

13 helical membrane-spanning segments follow: residues 5 to 25 (GFLL…PLGS), 27 to 47 (LARL…RILW), 63 to 83 (LLAL…LLFW), 132 to 152 (GLTV…FALI), 170 to 190 (LVRI…LFFI), 253 to 273 (LAQM…FGEA), 283 to 303 (LLWA…WAEV), 327 to 347 (FGVL…CGAV), 356 to 376 (ALGG…FGGV), 379 to 399 (GLYG…LMIG), 416 to 436 (MTAL…ALAM), 484 to 504 (LLAF…MAIA), and 524 to 544 (GALF…LTFI).

It belongs to the KdpA family. As to quaternary structure, the system is composed of three essential subunits: KdpA, KdpB and KdpC.

The protein resides in the cell inner membrane. Its function is as follows. Part of the high-affinity ATP-driven potassium transport (or Kdp) system, which catalyzes the hydrolysis of ATP coupled with the electrogenic transport of potassium into the cytoplasm. This subunit binds the periplasmic potassium ions and delivers the ions to the membrane domain of KdpB through an intramembrane tunnel. This Salmonella dublin (strain CT_02021853) protein is Potassium-transporting ATPase potassium-binding subunit.